The primary structure comprises 792 residues: Endonuclease MutS2 (792 aa).

334 to 341 (GPNTGGKT) contributes to the ATP binding site. Residues 717 to 792 (IDLRGMMLSE…ENGVTVVELK (76 aa)) enclose the Smr domain.

It belongs to the DNA mismatch repair MutS family. MutS2 subfamily. Homodimer. Binds to stalled ribosomes, contacting rRNA.

Endonuclease that is involved in the suppression of homologous recombination and thus may have a key role in the control of bacterial genetic diversity. Functionally, acts as a ribosome collision sensor, splitting the ribosome into its 2 subunits. Detects stalled/collided 70S ribosomes which it binds and splits by an ATP-hydrolysis driven conformational change. Acts upstream of the ribosome quality control system (RQC), a ribosome-associated complex that mediates the extraction of incompletely synthesized nascent chains from stalled ribosomes and their subsequent degradation. Probably generates substrates for RQC. The polypeptide is Endonuclease MutS2 (Ruminiclostridium cellulolyticum (strain ATCC 35319 / DSM 5812 / JCM 6584 / H10) (Clostridium cellulolyticum)).